Here is a 924-residue protein sequence, read N- to C-terminus: Isoleucine--tRNA ligase (924 aa).

The 'HIGH' region motif lies at 58–68 (PYANGQIHVGH). Glu561 is a binding site for L-isoleucyl-5'-AMP. Residues 602-606 (KMSKS) carry the 'KMSKS' region motif. Lys605 contributes to the ATP binding site. Zn(2+) contacts are provided by Cys887, Cys890, Cys907, and Cys910.

The protein belongs to the class-I aminoacyl-tRNA synthetase family. IleS type 1 subfamily. In terms of assembly, monomer. Zn(2+) is required as a cofactor.

Its subcellular location is the cytoplasm. It carries out the reaction tRNA(Ile) + L-isoleucine + ATP = L-isoleucyl-tRNA(Ile) + AMP + diphosphate. Catalyzes the attachment of isoleucine to tRNA(Ile). As IleRS can inadvertently accommodate and process structurally similar amino acids such as valine, to avoid such errors it has two additional distinct tRNA(Ile)-dependent editing activities. One activity is designated as 'pretransfer' editing and involves the hydrolysis of activated Val-AMP. The other activity is designated 'posttransfer' editing and involves deacylation of mischarged Val-tRNA(Ile). In Dichelobacter nodosus (strain VCS1703A), this protein is Isoleucine--tRNA ligase.